The primary structure comprises 275 residues: Dermonecrotic toxin SpeSicTox-betaIIA1 (275 aa).

H5 is an active-site residue. Residues E25 and D27 each coordinate Mg(2+). H41 (nucleophile) is an active-site residue. 2 disulfide bridges follow: C45–C51 and C47–C190. D85 is a binding site for Mg(2+).

Belongs to the arthropod phospholipase D family. Class II subfamily. Mg(2+) is required as a cofactor. Expressed by the venom gland.

It localises to the secreted. It carries out the reaction an N-(acyl)-sphingosylphosphocholine = an N-(acyl)-sphingosyl-1,3-cyclic phosphate + choline. The enzyme catalyses an N-(acyl)-sphingosylphosphoethanolamine = an N-(acyl)-sphingosyl-1,3-cyclic phosphate + ethanolamine. The catalysed reaction is a 1-acyl-sn-glycero-3-phosphocholine = a 1-acyl-sn-glycero-2,3-cyclic phosphate + choline. It catalyses the reaction a 1-acyl-sn-glycero-3-phosphoethanolamine = a 1-acyl-sn-glycero-2,3-cyclic phosphate + ethanolamine. Functionally, dermonecrotic toxins cleave the phosphodiester linkage between the phosphate and headgroup of certain phospholipids (sphingolipid and lysolipid substrates), forming an alcohol (often choline) and a cyclic phosphate. This toxin acts on sphingomyelin (SM). It may also act on ceramide phosphoethanolamine (CPE), lysophosphatidylcholine (LPC) and lysophosphatidylethanolamine (LPE), but not on lysophosphatidylserine (LPS), and lysophosphatidylglycerol (LPG). It acts by transphosphatidylation, releasing exclusively cyclic phosphate products as second products. Induces dermonecrosis, hemolysis, increased vascular permeability, edema, inflammatory response, and platelet aggregation. The protein is Dermonecrotic toxin SpeSicTox-betaIIA1 of Sicarius peruensis (Six-eyed sand spider).